Consider the following 189-residue polypeptide: Large ribosomal subunit protein eL19A (189 aa).

Lys-21 is covalently cross-linked (Glycyl lysine isopeptide (Lys-Gly) (interchain with G-Cter in ubiquitin)). A phosphoserine mark is found at Ser-30 and Ser-37. Glycyl lysine isopeptide (Lys-Gly) (interchain with G-Cter in ubiquitin) cross-links involve residues Lys-53 and Lys-60. The disordered stretch occupies residues 58–85; it reads HSKSRTRAHAQSKREGRHSGYGKRKGTR. Residues 59-68 are compositionally biased toward basic residues; sequence SKSRTRAHAQ. Ser-91 is subject to Phosphoserine. Glycyl lysine isopeptide (Lys-Gly) (interchain with G-Cter in ubiquitin) cross-links involve residues Lys-146 and Lys-186. The disordered stretch occupies residues 164–189; that stretch reads LKNRAARDRRAQRVAEKRDALLKEDA.

The protein belongs to the eukaryotic ribosomal protein eL19 family. As to quaternary structure, component of the large ribosomal subunit (LSU). Mature yeast ribosomes consist of a small (40S) and a large (60S) subunit. The 40S small subunit contains 1 molecule of ribosomal RNA (18S rRNA) and 33 different proteins (encoded by 57 genes). The large 60S subunit contains 3 rRNA molecules (25S, 5.8S and 5S rRNA) and 46 different proteins (encoded by 81 genes). eL19 lies in close proximity to the binding site for eukaryotic initiation factor eIF4G.

The protein localises to the cytoplasm. Its function is as follows. Component of the ribosome, a large ribonucleoprotein complex responsible for the synthesis of proteins in the cell. The small ribosomal subunit (SSU) binds messenger RNAs (mRNAs) and translates the encoded message by selecting cognate aminoacyl-transfer RNA (tRNA) molecules. The large subunit (LSU) contains the ribosomal catalytic site termed the peptidyl transferase center (PTC), which catalyzes the formation of peptide bonds, thereby polymerizing the amino acids delivered by tRNAs into a polypeptide chain. The nascent polypeptides leave the ribosome through a tunnel in the LSU and interact with protein factors that function in enzymatic processing, targeting, and the membrane insertion of nascent chains at the exit of the ribosomal tunnel. eL19 may play a role in the last stages of translation initiation, in particular subunit joining and shedding/releasing factors. The sequence is that of Large ribosomal subunit protein eL19A from Saccharomyces cerevisiae (strain ATCC 204508 / S288c) (Baker's yeast).